Here is a 122-residue protein sequence, read N- to C-terminus: MARIAGVNIPTAKRVVIALRYIHGIGPKFAQEICEKVGIPAERRVNQLTDAEVLQIRETIDRDYQVEGDLRRETSMNIKRLMDLGSYRGLRHRRSLPVRGQRTHTNARTRKGPAKAIAGKKK.

Residues 97 to 122 (PVRGQRTHTNARTRKGPAKAIAGKKK) form a disordered region.

Belongs to the universal ribosomal protein uS13 family. In terms of assembly, part of the 30S ribosomal subunit. Forms a loose heterodimer with protein S19. Forms two bridges to the 50S subunit in the 70S ribosome.

Its function is as follows. Located at the top of the head of the 30S subunit, it contacts several helices of the 16S rRNA. In the 70S ribosome it contacts the 23S rRNA (bridge B1a) and protein L5 of the 50S subunit (bridge B1b), connecting the 2 subunits; these bridges are implicated in subunit movement. Contacts the tRNAs in the A and P-sites. The chain is Small ribosomal subunit protein uS13 from Rhizobium rhizogenes (strain K84 / ATCC BAA-868) (Agrobacterium radiobacter).